We begin with the raw amino-acid sequence, 162 residues long: Large ribosomal subunit protein uL15 (162 aa).

Residues 1–44 (MKLNELRDNPGATKNRIRVGRGIGSGKGKTAGRGVKGQKSREGV) are disordered. Positions 21 to 35 (RGIGSGKGKTAGRGV) are enriched in gly residues.

Belongs to the universal ribosomal protein uL15 family. As to quaternary structure, part of the 50S ribosomal subunit.

Binds to the 23S rRNA. The chain is Large ribosomal subunit protein uL15 from Rhodospirillum rubrum (strain ATCC 11170 / ATH 1.1.1 / DSM 467 / LMG 4362 / NCIMB 8255 / S1).